The following is a 372-amino-acid chain: 3-isopropylmalate dehydrogenase (372 aa).

79 to 90 (GPKWQGGAVRPE) provides a ligand contact to NAD(+). Positions 97, 107, 136, and 225 each coordinate substrate. Positions 225, 250, and 254 each coordinate Mg(2+). 289–300 (GSAPDLPAGKAN) is an NAD(+) binding site.

This sequence belongs to the isocitrate and isopropylmalate dehydrogenases family. As to quaternary structure, homodimer. Mg(2+) serves as cofactor. It depends on Mn(2+) as a cofactor.

The protein resides in the cytoplasm. It catalyses the reaction (2R,3S)-3-isopropylmalate + NAD(+) = 4-methyl-2-oxopentanoate + CO2 + NADH. The protein operates within amino-acid biosynthesis; L-leucine biosynthesis; L-leucine from 3-methyl-2-oxobutanoate: step 3/4. In terms of biological role, catalyzes the oxidation of 3-carboxy-2-hydroxy-4-methylpentanoate (3-isopropylmalate) to 3-carboxy-4-methyl-2-oxopentanoate. The product decarboxylates to 4-methyl-2 oxopentanoate. The polypeptide is 3-isopropylmalate dehydrogenase (LEU2) (Eremothecium gossypii (strain ATCC 10895 / CBS 109.51 / FGSC 9923 / NRRL Y-1056) (Yeast)).